Reading from the N-terminus, the 306-residue chain is Ornithine carbamoyltransferase 1, anabolic (306 aa).

Carbamoyl phosphate contacts are provided by residues 53-56 (STRT), Gln-80, Arg-104, and 131-134 (HPCQ). L-ornithine is bound by residues Asn-162, Asp-219, and 223–224 (SM). Carbamoyl phosphate contacts are provided by residues 259 to 260 (CL) and Arg-287.

It belongs to the aspartate/ornithine carbamoyltransferase superfamily. OTCase family. In terms of assembly, homotrimer.

Its subcellular location is the cytoplasm. The enzyme catalyses carbamoyl phosphate + L-ornithine = L-citrulline + phosphate + H(+). The protein operates within amino-acid biosynthesis; L-arginine biosynthesis; L-arginine from L-ornithine and carbamoyl phosphate: step 1/3. Its activity is regulated as follows. Reversibly inhibited by inhibited by phaseolotoxin and octicidine. Its function is as follows. Reversibly catalyzes the transfer of the carbamoyl group from carbamoyl phosphate (CP) to the N(epsilon) atom of ornithine (ORN) to produce L-citrulline, which is a substrate for argininosuccinate synthetase, the enzyme involved in the final step in arginine biosynthesis. The protein is Ornithine carbamoyltransferase 1, anabolic of Pseudomonas savastanoi pv. phaseolicola (Pseudomonas syringae pv. phaseolicola).